The following is a 238-amino-acid chain: Glyceraldehyde 3-phosphate phosphatase (238 aa).

The protein belongs to the HAD-like hydrolase superfamily. The cofactor is Mg(2+).

Catalyzes the dephosphorylation of D,L-glyceraldehyde 3-phosphate in vitro. The sequence is that of Glyceraldehyde 3-phosphate phosphatase from Pyrococcus abyssi (strain GE5 / Orsay).